The chain runs to 68 residues: Large ribosomal subunit protein uL29 (68 aa).

This sequence belongs to the universal ribosomal protein uL29 family.

This chain is Large ribosomal subunit protein uL29 (rpl29), found in Thermoplasma acidophilum (strain ATCC 25905 / DSM 1728 / JCM 9062 / NBRC 15155 / AMRC-C165).